Consider the following 267-residue polypeptide: Putative F-box protein At1g61060 (267 aa).

The region spanning 15-63 (DYFDAIHVDLFTAKILSKLPVKSIAQCRCVSKLWSSQIRRPYYNMLFPI) is the F-box domain.

This is Putative F-box protein At1g61060 from Arabidopsis thaliana (Mouse-ear cress).